The primary structure comprises 873 residues: Ectonucleotide pyrophosphatase/phosphodiesterase family member 3 (873 aa).

Topologically, residues methionine 1 to glutamine 11 are cytoplasmic. The helical; Signal-anchor for type II membrane protein transmembrane segment at proline 12 to alanine 30 threads the bilayer. The Extracellular segment spans residues leucine 31–isoleucine 873. 2 consecutive SMB domains span residues glutamine 51 to threonine 93 and arginine 94 to serine 138. Intrachain disulfides connect cysteine 54-cysteine 71, cysteine 58-cysteine 89, cysteine 69-cysteine 82, cysteine 75-cysteine 81, cysteine 98-cysteine 115, cysteine 103-cysteine 133, cysteine 113-cysteine 126, cysteine 119-cysteine 125, cysteine 144-cysteine 190, and cysteine 152-cysteine 364. The short motif at arginine 78 to aspartate 80 is the Cell attachment site element. A phosphodiesterase region spans residues proline 160 to valine 544. Aspartate 167 contacts Zn(2+). Lysine 204 provides a ligand contact to ATP. A Zn(2+)-binding site is contributed by threonine 205. Catalysis depends on threonine 205, which acts as the Nucleophile. Residue asparagine 226 coordinates ATP. Residue asparagine 236 is glycosylated (N-linked (GlcNAc...) asparagine). ATP is bound at residue glutamate 275. Residue asparagine 279 is glycosylated (N-linked (GlcNAc...) asparagine). Tyrosine 289 contacts ATP. Asparagine 290 carries N-linked (GlcNAc...) asparagine glycosylation. Zn(2+) contacts are provided by aspartate 325, histidine 329, aspartate 372, and histidine 373. 6 disulfide bridges follow: cysteine 380/cysteine 477, cysteine 428/cysteine 816, cysteine 561/cysteine 621, cysteine 573/cysteine 677, cysteine 575/cysteine 662, and cysteine 785/cysteine 795. An N-linked (GlcNAc...) asparagine glycan is attached at asparagine 425. Position 482 (histidine 482) interacts with Zn(2+). N-linked (GlcNAc...) asparagine glycans are attached at residues asparagine 532, asparagine 592, asparagine 685, and asparagine 697. Positions asparagine 580 to isoleucine 873 are nuclease. Ca(2+)-binding residues include aspartate 750, asparagine 752, aspartate 754, histidine 756, and aspartate 758. Asparagine 787 carries an N-linked (GlcNAc...) asparagine glycan.

As to quaternary structure, monomer and homodimer. Requires Zn(2+) as cofactor. In terms of processing, N-glycosylated. N-glycosylation is necessary for normal transport to the cell membrane, but is not the apical targeting signal.

Its subcellular location is the cell membrane. It localises to the apical cell membrane. It is found in the secreted. It carries out the reaction a ribonucleoside 5'-triphosphate + H2O = a ribonucleoside 5'-phosphate + diphosphate + H(+). The enzyme catalyses ATP + H2O = AMP + diphosphate + H(+). The catalysed reaction is CTP + H2O = CMP + diphosphate + H(+). It catalyses the reaction GTP + H2O = GMP + diphosphate + H(+). It carries out the reaction UTP + H2O = UMP + diphosphate + H(+). The enzyme catalyses UDP-N-acetyl-alpha-D-glucosamine + H2O = N-acetyl-alpha-D-glucosamine 1-phosphate + UMP + 2 H(+). The catalysed reaction is P(1),P(3)-bis(5'-adenosyl) triphosphate + H2O = AMP + ADP + 2 H(+). It catalyses the reaction P(1),P(4)-bis(5'-adenosyl) tetraphosphate + H2O = AMP + ATP + 2 H(+). It carries out the reaction P(1),P(5)-bis(5'-adenosyl) pentaphosphate + H2O = adenosine 5'-tetraphosphate + AMP + 2 H(+). The enzyme catalyses P(1),P(4)-bis(5'-guanosyl) tetraphosphate + H2O = GMP + GTP + 2 H(+). The catalysed reaction is Hydrolytically removes 5'-nucleotides successively from the 3'-hydroxy termini of 3'-hydroxy-terminated oligonucleotides.. Functionally, hydrolase that metabolizes extracellular nucleotides, including ATP, GTP, UTP and CTP. Limits mast cells and basophils response during inflammation and during the chronic phases of allergic responses by eliminating extracellular ATP, a signaling molecule activating these cells in an autocrine manner. Metabolizes extracellular ATP in the lumen of the small intestine, and thereby prevents ATP-induced apoptosis of intestinal plasmacytoid dendritic cells. Has a broad specificity and can also hydrolyze UDP-GlcNAc into UMP and GlcNAc-1-phosphate and potentially several other intracellular nucleotide sugars, including UDP-GalNAc, CMP-NeuAc, GDP-Fuc, and UDP-GlcA. Thereby, could modulate glycan biosynthesis and protein glycosylation. Can hydrolyze extracellular dinucleoside polyphosphates, including the vasoactive adenosine polyphosphates as well. In addition, displays an alkaline phosphodiesterase activity in vitro. The protein is Ectonucleotide pyrophosphatase/phosphodiesterase family member 3 of Pongo abelii (Sumatran orangutan).